Consider the following 297-residue polypeptide: Hydroxysqualene synthase (297 aa).

The protein belongs to the phytoene/squalene synthase family. HpnC subfamily.

It catalyses the reaction presqualene diphosphate + H2O = hydroxysqualene + diphosphate. It participates in secondary metabolite biosynthesis; hopanoid biosynthesis. Involved in the biosynthesis of the hopanoid precursor squalene (SQ) from farnesyl diphosphate (FPP). Catalyzes the second step, the conversion of presqualene diphosphate (PSPP) to hydroxysqualene (HSQ). The chain is Hydroxysqualene synthase from Zymomonas mobilis subsp. mobilis (strain ATCC 31821 / ZM4 / CP4).